We begin with the raw amino-acid sequence, 131 residues long: Small ribosomal subunit protein bS6 (131 aa).

The tract at residues 98–131 (EASPMVKAKDERRERREDFANETADDSEAGDSEE) is disordered. Over residues 104 to 116 (KAKDERRERREDF) the composition is skewed to basic and acidic residues. The span at 120-131 (TADDSEAGDSEE) shows a compositional bias: acidic residues.

Belongs to the bacterial ribosomal protein bS6 family.

Binds together with bS18 to 16S ribosomal RNA. This chain is Small ribosomal subunit protein bS6, found in Klebsiella pneumoniae subsp. pneumoniae (strain ATCC 700721 / MGH 78578).